The chain runs to 275 residues: Tryptophan synthase alpha chain (275 aa).

Residues Glu60 and Asp71 each act as proton acceptor in the active site.

This sequence belongs to the TrpA family. As to quaternary structure, tetramer of two alpha and two beta chains.

It catalyses the reaction (1S,2R)-1-C-(indol-3-yl)glycerol 3-phosphate + L-serine = D-glyceraldehyde 3-phosphate + L-tryptophan + H2O. Its pathway is amino-acid biosynthesis; L-tryptophan biosynthesis; L-tryptophan from chorismate: step 5/5. The alpha subunit is responsible for the aldol cleavage of indoleglycerol phosphate to indole and glyceraldehyde 3-phosphate. This chain is Tryptophan synthase alpha chain, found in Prochlorococcus marinus (strain MIT 9313).